Reading from the N-terminus, the 270-residue chain is MLPYPQIDPVALAIGPLKIHWYGLMYLIGIGGAWFLASRRLNRFDPTWTKEKLSDLIFWLSMGVIVGGRLGYVLFYDLPAYIANPTLIFEVWKGGMAFHGGFIGVMIAAWWFGRRNGKSFFQLMDFVAPMVPIGLGAGRIGNFINAELWGKPTDVPWAMIFPPFSDPAQLPRHPSQLYQFALEGVALFLILYIFSRKPRPTMAVSGMFALFYGIFRFVVEFVRVPDAQLGYLAFGWVTMGQILSLPMILGGLGLLWWAYNRPQPLKNTAL.

Helical transmembrane passes span 10-30, 56-76, 92-112, 120-140, 174-194, 202-222, and 236-256; these read VALA…LIGI, LIFW…VLFY, WKGG…AWWF, FFQL…AGRI, PSQL…LYIF, MAVS…VEFV, and WVTM…GLLW. Arg139 provides a ligand contact to a 1,2-diacyl-sn-glycero-3-phospho-(1'-sn-glycerol).

The protein belongs to the Lgt family.

It is found in the cell inner membrane. It carries out the reaction L-cysteinyl-[prolipoprotein] + a 1,2-diacyl-sn-glycero-3-phospho-(1'-sn-glycerol) = an S-1,2-diacyl-sn-glyceryl-L-cysteinyl-[prolipoprotein] + sn-glycerol 1-phosphate + H(+). Its pathway is protein modification; lipoprotein biosynthesis (diacylglyceryl transfer). Functionally, catalyzes the transfer of the diacylglyceryl group from phosphatidylglycerol to the sulfhydryl group of the N-terminal cysteine of a prolipoprotein, the first step in the formation of mature lipoproteins. The polypeptide is Phosphatidylglycerol--prolipoprotein diacylglyceryl transferase (Pseudomonas fluorescens (strain SBW25)).